A 163-amino-acid chain; its full sequence is Phosphopantetheine adenylyltransferase (163 aa).

T9 serves as a coordination point for substrate. Residues 9-10 and H17 each bind ATP; that span reads TF. 3 residues coordinate substrate: K41, L76, and R90. ATP contacts are provided by residues 91–93, E101, and 126–132; these read GLR and HQAIASR.

The protein belongs to the bacterial CoaD family. Homohexamer. The cofactor is Mg(2+).

It is found in the cytoplasm. It carries out the reaction (R)-4'-phosphopantetheine + ATP + H(+) = 3'-dephospho-CoA + diphosphate. It participates in cofactor biosynthesis; coenzyme A biosynthesis; CoA from (R)-pantothenate: step 4/5. Functionally, reversibly transfers an adenylyl group from ATP to 4'-phosphopantetheine, yielding dephospho-CoA (dPCoA) and pyrophosphate. The polypeptide is Phosphopantetheine adenylyltransferase (Caulobacter vibrioides (strain ATCC 19089 / CIP 103742 / CB 15) (Caulobacter crescentus)).